The primary structure comprises 393 residues: Beta-1,4-galactosyltransferase 3 (393 aa).

Over 1–10 the chain is Cytoplasmic; the sequence is MLRRLLERPC. A helical; Signal-anchor for type II membrane protein transmembrane segment spans residues 11–31; sequence TLALLVGSQLAVMMYLSLGGF. Residues 32 to 393 lie on the Lumenal side of the membrane; the sequence is RSLSALFGRD…ANHTALRGSH (362 aa). An N-linked (GlcNAc...) asparagine glycan is attached at Asn-57. Residues Cys-77 and Cys-119 are joined by a disulfide bond. 130–134 contacts UDP-alpha-D-galactose; that stretch reads PHRAR. Asn-166 is a glycosylation site (N-linked (GlcNAc...) asparagine). UDP-alpha-D-galactose contacts are provided by residues 169–171, 196–197, Tyr-226, and Trp-258; these read FNR and VD. Residues Cys-190 and Cys-209 are joined by a disulfide bond. Asp-197 lines the Mn(2+) pocket. Residue 260–263 participates in N-acetyl-D-glucosamine binding; that stretch reads GEDD. Position 291 (His-291) interacts with Mn(2+). A UDP-alpha-D-galactose-binding site is contributed by 291 to 293; that stretch reads HRG. Position 303 (Arg-303) interacts with N-acetyl-D-glucosamine. N-linked (GlcNAc...) asparagine glycans are attached at residues Asn-337 and Asn-385. Positions 339–393 are disordered; the sequence is TADIGTDPRGPRAPSGPRYPPGSSQAFRQEMLQRRPPARPGPLSTANHTALRGSH.

It belongs to the glycosyltransferase 7 family. It depends on Mn(2+) as a cofactor. In terms of tissue distribution, found in various tissues. Highest expression in placenta, prostate, testis, ovary, intestine and muscle, and in fetal brain.

The protein resides in the golgi apparatus. It localises to the golgi stack membrane. The catalysed reaction is an N-acetyl-beta-D-glucosaminyl derivative + UDP-alpha-D-galactose = a beta-D-galactosyl-(1-&gt;4)-N-acetyl-beta-D-glucosaminyl derivative + UDP + H(+). It carries out the reaction N-acetyl-D-glucosamine + UDP-alpha-D-galactose = beta-D-galactosyl-(1-&gt;4)-N-acetyl-D-glucosamine + UDP + H(+). It catalyses the reaction a beta-D-GlcNAc-(1-&gt;3)-beta-D-Gal-(1-&gt;4)-beta-D-Glc-(1&lt;-&gt;1)-Cer(d18:1(4E)) + UDP-alpha-D-galactose = a neolactoside nLc4Cer(d18:1(4E)) + UDP + H(+). The enzyme catalyses a beta-D-glucosylceramide + UDP-alpha-D-galactose = a beta-D-galactosyl-(1-&gt;4)-beta-D-glucosyl-(1&lt;-&gt;1)-ceramide + UDP + H(+). The catalysed reaction is a neolactoside IV(3)-beta-GlcNAc-nLc4Cer + UDP-alpha-D-galactose = a neolactoside nLc6Cer + UDP + H(+). Its pathway is protein modification; protein glycosylation. Its function is as follows. Responsible for the synthesis of complex-type N-linked oligosaccharides in many glycoproteins as well as the carbohydrate moieties of glycolipids. The polypeptide is Beta-1,4-galactosyltransferase 3 (Homo sapiens (Human)).